A 118-amino-acid polypeptide reads, in one-letter code: Small ribosomal subunit protein uS13 (118 aa).

Residues Ser-94–Lys-118 are disordered.

It belongs to the universal ribosomal protein uS13 family. Part of the 30S ribosomal subunit. Forms a loose heterodimer with protein S19. Forms two bridges to the 50S subunit in the 70S ribosome.

Functionally, located at the top of the head of the 30S subunit, it contacts several helices of the 16S rRNA. In the 70S ribosome it contacts the 23S rRNA (bridge B1a) and protein L5 of the 50S subunit (bridge B1b), connecting the 2 subunits; these bridges are implicated in subunit movement. Contacts the tRNAs in the A and P-sites. This Shewanella halifaxensis (strain HAW-EB4) protein is Small ribosomal subunit protein uS13.